The chain runs to 440 residues: 3-phosphoshikimate 1-carboxyvinyltransferase (440 aa).

3-phosphoshikimate-binding residues include Lys25, Ser26, and Arg30. Lys25 lines the phosphoenolpyruvate pocket. Gly96 and Arg124 together coordinate phosphoenolpyruvate. The 3-phosphoshikimate site is built by Ser168, Gln169, Asp310, and Lys337. Gln169 contacts phosphoenolpyruvate. Asp310 (proton acceptor) is an active-site residue. Arg341, Arg382, and Lys409 together coordinate phosphoenolpyruvate.

It belongs to the EPSP synthase family. Monomer.

Its subcellular location is the cytoplasm. It carries out the reaction 3-phosphoshikimate + phosphoenolpyruvate = 5-O-(1-carboxyvinyl)-3-phosphoshikimate + phosphate. It functions in the pathway metabolic intermediate biosynthesis; chorismate biosynthesis; chorismate from D-erythrose 4-phosphate and phosphoenolpyruvate: step 6/7. Catalyzes the transfer of the enolpyruvyl moiety of phosphoenolpyruvate (PEP) to the 5-hydroxyl of shikimate-3-phosphate (S3P) to produce enolpyruvyl shikimate-3-phosphate and inorganic phosphate. This chain is 3-phosphoshikimate 1-carboxyvinyltransferase, found in Chlamydia trachomatis serovar L2 (strain ATCC VR-902B / DSM 19102 / 434/Bu).